The following is a 131-amino-acid chain: Profilin-5 (131 aa).

A disulfide bond links Cys-13 and Cys-115. The Involved in PIP2 interaction motif lies at 81–97 (AVIRGKKGAGGITIKKT). Thr-111 carries the post-translational modification Phosphothreonine.

It belongs to the profilin family. Occurs in many kinds of cells as a complex with monomeric actin in a 1:1 ratio. Post-translationally, phosphorylated by MAP kinases.

It localises to the cytoplasm. The protein resides in the cytoskeleton. Binds to actin and affects the structure of the cytoskeleton. At high concentrations, profilin prevents the polymerization of actin, whereas it enhances it at low concentrations. This is Profilin-5 from Olea europaea (Common olive).